The primary structure comprises 256 residues: Cell division protein DivIB (256 aa).

The Cytoplasmic portion of the chain corresponds to 1–23; sequence MSKDLISTDEYIKIKKKRKRIKK. The helical transmembrane segment at 24 to 44 threads the bilayer; sequence IVVLFIFLISILVTLCLKIPY. In terms of domain architecture, POTRA spans 45–113; sequence FNIESIEIKG…NKLQIYVKER (69 aa). Topologically, residues 45–256 are extracellular; sequence FNIESIEIKG…EGNPVFYIEK (212 aa).

It belongs to the FtsQ/DivIB family. DivIB subfamily.

The protein localises to the cell membrane. In terms of biological role, cell division protein that may be involved in stabilizing or promoting the assembly of the division complex. The chain is Cell division protein DivIB from Clostridium botulinum (strain Hall / ATCC 3502 / NCTC 13319 / Type A).